A 461-amino-acid chain; its full sequence is Nuclear distribution protein PAC1 (461 aa).

The LisH domain occupies 9 to 41; the sequence is QAEELHKSIIAYLTANNLLNTANTLRAELNLSE. WD repeat units lie at residues 114–155, 157–197, 201–248, 251–290, 312–355, 357–396, and 401–457; these read SHRD…RTIK, HTRA…KNIR, GHDH…CVRT, GHTAWVRDVYPSPDGRFLLSTGDDSTARLWDISVSNPESK, QYLS…LMTL, GHDNWIRALAFHPGGKYLFSVSDDRTLRCWDLSQEGKCIK, and AHER…MKLR.

Belongs to the WD repeat LIS1/nudF family. In terms of assembly, self-associates. Interacts with NDL1 and dynein.

Its subcellular location is the cytoplasm. It localises to the cytoskeleton. The protein localises to the spindle pole. Its function is as follows. Positively regulates the activity of the minus-end directed microtubule motor protein dynein. May enhance dynein-mediated microtubule sliding by targeting dynein to the microtubule plus end. Required for nuclear migration during vegetative growth as well as development. Required for retrograde early endosome (EE) transport from the hyphal tip. Required for localization of dynein to the mitotic spindle poles. Recruits additional proteins to the dynein complex at SPBs. The sequence is that of Nuclear distribution protein PAC1 from Arthroderma otae (strain ATCC MYA-4605 / CBS 113480) (Microsporum canis).